The primary structure comprises 450 residues: Cysteine proteinase (450 aa).

Positions 1–20 (MPRTEMVRFVRLPVVLLAMA) are cleaved as a signal peptide. Residues 21-125 (ACLASVALGS…RKTVNVTTGR (105 aa)) constitute a propeptide, activation peptide. Residue Asn120 is glycosylated (N-linked (GlcNAc...) asparagine). Cys147 and Cys188 are disulfide-bonded. Catalysis depends on residues Cys150, His287, and Asn307. A 108-residue extension region spans residues 343–450 (TPPPPPPPPP…TKAARLVPHQ (108 aa)). Residue Asn397 is glycosylated (N-linked (GlcNAc...) asparagine).

This sequence belongs to the peptidase C1 family.

Its subcellular location is the lysosome. The cysteine proteinases have a potential role in host-parasite interaction and virulence. The sequence is that of Cysteine proteinase from Trypanosoma brucei brucei.